We begin with the raw amino-acid sequence, 294 residues long: Putative ribose uptake protein RbsU (294 aa).

10 helical membrane passes run 2 to 24, 34 to 56, 63 to 82, 92 to 114, 121 to 140, 150 to 172, 179 to 198, 218 to 235, 242 to 264, and 274 to 293; these read NAVN…VIVG, ILGT…GTPI, IFCL…TFHV, MPIT…LGNW, LIGF…TAWS, GAVK…SAFP, GFQG…IIFG, IFSG…LISA, LATG…IYIL, and IAVM…TAFI.

Belongs to the GRP transporter (TC 2.A.7.5) family.

It is found in the cell membrane. Its function is as follows. Could be involved in the uptake of ribose. This is Putative ribose uptake protein RbsU (rbsU) from Latilactobacillus sakei subsp. sakei (strain 23K) (Lactobacillus sakei subsp. sakei).